We begin with the raw amino-acid sequence, 899 residues long: Protein translocase subunit SecA (899 aa).

ATP is bound by residues glutamine 89, 107 to 111 (GEGKT), and aspartate 502. Residues cysteine 882, cysteine 884, cysteine 893, and histidine 894 each contribute to the Zn(2+) site.

Belongs to the SecA family. As to quaternary structure, monomer and homodimer. Part of the essential Sec protein translocation apparatus which comprises SecA, SecYEG and auxiliary proteins SecDF-YajC and YidC. Requires Zn(2+) as cofactor.

It is found in the cell inner membrane. The protein localises to the cytoplasm. The enzyme catalyses ATP + H2O + cellular proteinSide 1 = ADP + phosphate + cellular proteinSide 2.. In terms of biological role, part of the Sec protein translocase complex. Interacts with the SecYEG preprotein conducting channel. Has a central role in coupling the hydrolysis of ATP to the transfer of proteins into and across the cell membrane, serving both as a receptor for the preprotein-SecB complex and as an ATP-driven molecular motor driving the stepwise translocation of polypeptide chains across the membrane. The polypeptide is Protein translocase subunit SecA (Allorhizobium ampelinum (strain ATCC BAA-846 / DSM 112012 / S4) (Agrobacterium vitis (strain S4))).